A 275-amino-acid chain; its full sequence is Probable endonuclease lcl3 (275 aa).

Residues 1-25 are disordered; the sequence is MRWPPWASNTQASNNDHPTTTNNND. Residues 14-25 are compositionally biased toward low complexity; sequence NNDHPTTTNNND. The chain crosses the membrane as a helical span at residues 41–57; it reads LIPTLVLTTGILSAFTL. Residues 79–247 enclose the TNase-like domain; that stretch reads RSILGKVTSV…KARGLGLWKG (169 aa). Residue arginine 130 is part of the active site. Residue aspartate 135 coordinates Ca(2+). Residues glutamate 138 and arginine 178 contribute to the active site.

This sequence belongs to the LCL3 family.

Its subcellular location is the mitochondrion. The protein resides in the membrane. In Aspergillus niger (strain ATCC MYA-4892 / CBS 513.88 / FGSC A1513), this protein is Probable endonuclease lcl3 (lcl3).